A 334-amino-acid chain; its full sequence is MLKASLISIASYVPEKILTNFDLEKMVDTSDEWIVKRTGIKERHIAEGEITSDLGTKAAKLAIKRAGLEKPQIDTIICATMSPDHLCMPSTACKIAANLGLDYGITAFDISAACTGFIYLLQLANSLIKSGAKKNVLIVGAEKLSSVVDYTDRSTCILFGDGAGAAIISASNENEIIDIHTASDGTQSHLLITPGCGSAYPASDETLAKRLNFIHMSGNEVFKIAVQTLTKSVIEILERNNMTSRDIDFFVPHQANIRIIEAVKQRLDFKDEQCVLTIAKYGNTSSASIPMAINDAYESGRIKNGSTLLLDAFGGGFTWGSAILKFGGKNFYQI.

Active-site residues include cysteine 114 and histidine 253. Residues 254–258 form an ACP-binding region; sequence QANIR. Asparagine 283 is an active-site residue.

It belongs to the thiolase-like superfamily. FabH family. In terms of assembly, homodimer.

The protein resides in the cytoplasm. It catalyses the reaction malonyl-[ACP] + acetyl-CoA + H(+) = 3-oxobutanoyl-[ACP] + CO2 + CoA. Its pathway is lipid metabolism; fatty acid biosynthesis. Functionally, catalyzes the condensation reaction of fatty acid synthesis by the addition to an acyl acceptor of two carbons from malonyl-ACP. Catalyzes the first condensation reaction which initiates fatty acid synthesis and may therefore play a role in governing the total rate of fatty acid production. Possesses both acetoacetyl-ACP synthase and acetyl transacylase activities. Its substrate specificity determines the biosynthesis of branched-chain and/or straight-chain of fatty acids. In Campylobacter curvus (strain 525.92), this protein is Beta-ketoacyl-[acyl-carrier-protein] synthase III.